The primary structure comprises 358 residues: Fructose-bisphosphate aldolase 3, cytoplasmic (358 aa).

R39 lines the substrate pocket. The Proton acceptor role is filled by E183. K225 functions as the Schiff-base intermediate with dihydroxyacetone-P in the catalytic mechanism. Substrate is bound by residues 266-268 (SGG) and R298.

The protein belongs to the class I fructose-bisphosphate aldolase family. In terms of assembly, homotetramer.

The protein localises to the cytoplasm. The protein resides in the cytosol. The enzyme catalyses beta-D-fructose 1,6-bisphosphate = D-glyceraldehyde 3-phosphate + dihydroxyacetone phosphate. The protein operates within carbohydrate degradation; glycolysis; D-glyceraldehyde 3-phosphate and glycerone phosphate from D-glucose: step 4/4. Fructose-bisphosphate aldolase that plays a key role in glycolysis and gluconeogenesis. This Oryza sativa subsp. japonica (Rice) protein is Fructose-bisphosphate aldolase 3, cytoplasmic.